Here is a 205-residue protein sequence, read N- to C-terminus: Thymidine kinase (205 aa).

ATP-binding positions include 9–16 and 87–90; these read SAMNAGKS and DECQ. The Proton acceptor role is filled by E88. Residues C145, C147, C182, and H185 each coordinate Zn(2+).

Belongs to the thymidine kinase family. As to quaternary structure, homotetramer.

It localises to the cytoplasm. It carries out the reaction thymidine + ATP = dTMP + ADP + H(+). Allosteric enzyme which is feedback inhibited by dTTP and activated by a number of dNDP and dNTP. Its function is as follows. Phosphorylates both thymidine and deoxyuridine. This Escherichia coli O157:H7 protein is Thymidine kinase.